The sequence spans 711 residues: Long-chain-fatty-acid--CoA ligase 4 (711 aa).

A helical; Signal-anchor for type III membrane protein membrane pass occupies residues 8–28; the sequence is LTIILLPVHLLITIYSALIFI. The Cytoplasmic segment spans residues 29 to 711; the sequence is PWYFLTNAKK…KDIERMYGGK (683 aa). Phosphoserine is present on Ser-447.

This sequence belongs to the ATP-dependent AMP-binding enzyme family. Mg(2+) is required as a cofactor. Abundant in steroidogenic tissues, also found in the kidney, brain and liver.

It localises to the mitochondrion outer membrane. The protein localises to the peroxisome membrane. The protein resides in the microsome membrane. It is found in the endoplasmic reticulum membrane. Its subcellular location is the cell membrane. The catalysed reaction is a long-chain fatty acid + ATP + CoA = a long-chain fatty acyl-CoA + AMP + diphosphate. It carries out the reaction (5Z,8Z,11Z,14Z)-eicosatetraenoate + ATP + CoA = (5Z,8Z,11Z,14Z)-eicosatetraenoyl-CoA + AMP + diphosphate. It catalyses the reaction 15-hydroxy-(5Z,8Z,11Z,13E)-eicosatetraenoate + ATP + CoA = 15-hydroxy-(5Z,8Z,11Z,13E)-eicosatetraenoyl-CoA + AMP + diphosphate. The enzyme catalyses 12-hydroxy-(5Z,8Z,10E,14Z)-eicosatetraenoate + ATP + CoA = 12-hydroxy-(5Z,8Z,10E,14Z)-eicosatetraenoyl-CoA + AMP + diphosphate. The catalysed reaction is 5-hydroxy-(6E,8Z,11Z,14Z)-eicosatetraenoate + ATP + CoA = 5-hydroxy-(6E,8Z,11Z,14Z)-eicosatetraenoyl-CoA + AMP + diphosphate. It carries out the reaction 5,6-epoxy-(8Z,11Z,14Z)-eicosatrienoate + ATP + CoA = 5,6-epoxy-(8Z,11Z,14Z)-eicosatrienoyl-CoA + AMP + diphosphate. It catalyses the reaction 14,15-epoxy-(5Z,8Z,11Z)-eicosatrienoate + ATP + CoA = 14,15-epoxy-(5Z,8Z,11Z)-eicosatrienoyl-CoA + AMP + diphosphate. The enzyme catalyses 11,12-epoxy-(5Z,8Z,14Z)-eicosatrienoate + ATP + CoA = 11,12-epoxy-(5Z,8Z,14Z)-eicosatrienoyl-CoA + AMP + diphosphate. The catalysed reaction is 8,9-epoxy-(5Z,11Z,14Z)-eicosatrienoate + ATP + CoA = 8,9-epoxy-(5Z,11Z,14Z)-eicosatrienoyl-CoA + AMP + diphosphate. It carries out the reaction hexadecanoate + ATP + CoA = hexadecanoyl-CoA + AMP + diphosphate. It catalyses the reaction (E)-hexadec-2-enoate + ATP + CoA = (2E)-hexadecenoyl-CoA + AMP + diphosphate. Its activity is regulated as follows. Both triacsin C and rosiglitazone inhibit arachidonoyl-CoA ligase activity. Functionally, catalyzes the conversion of long-chain fatty acids to their active form acyl-CoA for both synthesis of cellular lipids, and degradation via beta-oxidation. Preferentially activates arachidonate and eicosapentaenoate as substrates. Preferentially activates 8,9-EET &gt; 14,15-EET &gt; 5,6-EET &gt; 11,12-EET. Modulates glucose-stimulated insulin secretion by regulating the levels of unesterified EETs. Modulates prostaglandin E2 secretion. The chain is Long-chain-fatty-acid--CoA ligase 4 (Acsl4) from Mus musculus (Mouse).